The primary structure comprises 1258 residues: Phospholipid-transporting ATPase C887.12 (1258 aa).

2 disordered regions span residues 1 to 41 (MARD…LGED) and 53 to 83 (YISS…SKAN). Residues 1–183 (MARDVDNKQN…PKFLKEQFSK (183 aa)) are Cytoplasmic-facing. The segment covering 53 to 64 (YISSSGQNSTNP) has biased composition (polar residues). The chain crosses the membrane as a helical span at residues 184–204 (YANLFFLFTAVVQQIPGITPV). Over 205–208 (NRYT) the chain is Lumenal. The chain crosses the membrane as a helical span at residues 209-229 (TIGPMLIVLSVSGIKEIMEDI). Residues 230-406 (KRKKQDQELN…TSVEKQVNSQ (177 aa)) lie on the Cytoplasmic side of the membrane. The helical transmembrane segment at 407-427 (ILFLLCIFVFLCFASSLGALI) threads the bilayer. The Lumenal portion of the chain corresponds to 428-451 (HRSVYGSALSYVKYTSNRAGMFFK). A helical transmembrane segment spans residues 452–472 (GLLTFWILYSNLVPISLFVTF). At 473–974 (ELVRYIQAQL…KLILYSFYKN (502 aa)) the chain is on the cytoplasmic side. Asp-518 functions as the 4-aspartylphosphate intermediate in the catalytic mechanism. The ATP site is built by Asp-518, Lys-519, Thr-520, Glu-613, Phe-654, Ser-656, Lys-659, Lys-677, Arg-710, Thr-711, Thr-790, Gly-791, Asp-792, Arg-883, and Lys-889. Asp-518 is a Mg(2+) binding site. A Mg(2+)-binding site is contributed by Thr-520. A Mg(2+)-binding site is contributed by Asp-909. Asn-912 and Asp-913 together coordinate ATP. Asp-913 contributes to the Mg(2+) binding site. The helical transmembrane segment at 975–995 (IALYMTQFWYAFCNAFSGQVI) threads the bilayer. At 996–998 (FES) the chain is on the lumenal side. Residues 999–1019 (WSISLYNVLFTVLPPVVIGIF) form a helical membrane-spanning segment. The Cytoplasmic segment spans residues 1020-1051 (DQFVSAGQLFQYPQLYQLGQRSEFFNLKRFWS). The helical transmembrane segment at 1052 to 1072 (WITNGFYHSLLLFLCSIAVFY) threads the bilayer. Residues 1073 to 1086 (YDGPNKDGLASGHW) lie on the Lumenal side of the membrane. The helical transmembrane segment at 1087-1107 (VWGTTLYAAILATVLGKAALI) threads the bilayer. Lys-1103 provides a ligand contact to a 1,2-diacyl-sn-glycero-3-phospho-(1D-myo-inositol 4-phosphate). The Cytoplasmic segment spans residues 1108–1115 (SNHWTQYT). The helical transmembrane segment at 1116 to 1136 (VIATLGSFLLWIVFMPIYAVA) threads the bilayer. The Lumenal portion of the chain corresponds to 1137-1148 (APAIGFSKEYYG). A helical transmembrane segment spans residues 1149-1169 (IIPHLYGNLKFWASLLVLPTI). The Cytoplasmic portion of the chain corresponds to 1170–1258 (ALMRDFVWKY…HTRGAYGEMR (89 aa)). Positions 1173, 1177, 1178, 1189, and 1190 each coordinate a 1,2-diacyl-sn-glycero-3-phospho-(1D-myo-inositol 4-phosphate).

It belongs to the cation transport ATPase (P-type) (TC 3.A.3) family. Type IV subfamily. The cofactor is Mg(2+).

Its subcellular location is the endoplasmic reticulum membrane. The protein localises to the golgi apparatus. It localises to the trans-Golgi network membrane. It catalyses the reaction ATP + H2O + phospholipidSide 1 = ADP + phosphate + phospholipidSide 2.. It carries out the reaction a 1,2-diacyl-sn-glycero-3-phospho-L-serine(out) + ATP + H2O = a 1,2-diacyl-sn-glycero-3-phospho-L-serine(in) + ADP + phosphate + H(+). The catalysed reaction is a 1,2-diacyl-sn-glycero-3-phosphoethanolamine(out) + ATP + H2O = a 1,2-diacyl-sn-glycero-3-phosphoethanolamine(in) + ADP + phosphate + H(+). In terms of biological role, catalytic component of a P4-ATPase flippase complex which catalyzes the hydrolysis of ATP coupled to the transport of phosphatidylserine and small amounts of ethanolamine from the lumen to the cytosolic leaflet of the trans-Golgi network and ensures the maintenance of asymmetric distribution of phospholipids. The protein is Phospholipid-transporting ATPase C887.12 of Schizosaccharomyces pombe (strain 972 / ATCC 24843) (Fission yeast).